A 242-amino-acid chain; its full sequence is Universal stress protein PHOS32 (242 aa).

Residues 1–43 (MNPADSDHPQLPNIKIHHPPSPRHSHHHHSSSTPSSAATPTPT) constitute a chloroplast transit peptide. Positions 1–45 (MNPADSDHPQLPNIKIHHPPSPRHSHHHHSSSTPSSAATPTPTAG) are disordered. Over residues 15 to 30 (KIHHPPSPRHSHHHHS) the composition is skewed to basic residues. ATP is bound at residue Pro-19. Ser-21 carries the post-translational modification Phosphoserine; by MAPK3 and MAPK6. The span at 31–44 (SSTPSSAATPTPTA) shows a compositional bias: low complexity. ATP-binding positions include Val-83, 168–178 (GSRGFGAEKKR), and 186–188 (SVS). A Phosphoserine modification is found at Ser-219.

The protein belongs to the universal stress protein A family. Phosphorylated by MAPK3 and MAPK6 after pathogenic elicitation (e.g. bacterial flg22, Phytophthora infestans zoospores and xylanase).

Its subcellular location is the plastid. The protein resides in the chloroplast. This is Universal stress protein PHOS32 from Arabidopsis thaliana (Mouse-ear cress).